The chain runs to 45 residues: Protamine Z2 (45 aa).

Residues 1–23 show a composition bias toward basic residues; the sequence is MKCGRKRRRRRRHACKRKKRACK. Positions 1-26 are disordered; that stretch reads MKCGRKRRRRRRHACKRKKRACKQRS.

As to expression, testis.

It localises to the nucleus. Its subcellular location is the chromosome. In terms of biological role, protamines substitute for histones in the chromatin of sperm during the haploid phase of spermatogenesis. They compact sperm DNA into a highly condensed, stable and inactive complex. This chain is Protamine Z2, found in Scyliorhinus canicula (Small-spotted catshark).